A 245-amino-acid chain; its full sequence is MIKLVLIRHGQSLWNLENRFTGWTDVDLSENGLSEAREAGAILKKNRYTFDVAYTSVLKRAIRTLWIVLHEMDLTWVPIHKSWKLNERHYGALQGLNKDETAQKYGEEQVHIWRRSVDVRPPALTEDDPRYEATDPRYKTLKKGEFPLTECLEDTEKRVLAYWHSEIAPILKNGNKVIISSHGNTIRSLVKYLDNLSSDGVVSLNIPTSIPLVYELDENLRPIRHYYLSMDGEVPEGEIPKHISF.

Substrate-binding positions include 8–15, 21–22, Arg-60, 87–90, Lys-98, 114–115, and 183–184; these read RHGQSLWN, TG, ERHY, RR, and GN. His-9 functions as the Tele-phosphohistidine intermediate in the catalytic mechanism. The active-site Proton donor/acceptor is the Glu-87.

The protein belongs to the phosphoglycerate mutase family. BPG-dependent PGAM subfamily.

It carries out the reaction (2R)-2-phosphoglycerate = (2R)-3-phosphoglycerate. It participates in carbohydrate degradation; glycolysis; pyruvate from D-glyceraldehyde 3-phosphate: step 3/5. Catalyzes the interconversion of 2-phosphoglycerate and 3-phosphoglycerate. The protein is 2,3-bisphosphoglycerate-dependent phosphoglycerate mutase of Bacillus cereus (strain G9842).